A 1409-amino-acid polypeptide reads, in one-letter code: MAP kinase-activating death domain protein (1409 aa).

Residues 26–230 (RGASQSSPDA…VPVPGKTKVQ (205 aa)) enclose the uDENN domain. In terms of domain architecture, cDENN spans 251 to 390 (RFTLIDFPLH…DATHLKERLK (140 aa)). Residues 392 to 496 (AINKMTTMTV…ECCLCPKNET (105 aa)) form the dDENN domain. Disordered stretches follow at residues 654 to 701 (SFDH…MKGL), 761 to 784 (QHIVRSKTQPNPTSQQTANQQSKN), 902 to 1008 (SSSA…KVKT), and 1015 to 1034 (PQNLVPNNQPAQPSSPSFLA). Polar residues-rich tracts occupy residues 680 to 691 (SDASDTPTSRGS) and 761 to 772 (QHIVRSKTQPNP). Composition is skewed to low complexity over residues 773-784 (TSQQTANQQSKN) and 902-913 (SSSAPSTMTTPS). The span at 915–925 (HSNDILKESRP) shows a compositional bias: basic and acidic residues. Over residues 941–961 (LGQNVTPTSTNNHEIAQSTRS) the composition is skewed to polar residues. Pro residues predominate over residues 963 to 1003 (ALPPPVPPREAPPIPKRNPPPLGAPPKVPEGARAPPPLPPR). The segment covering 1020–1031 (PNNQPAQPSSPS) has biased composition (low complexity). In terms of domain architecture, Death spans 1109–1184 (GMDQEPSEMI…GLVCSKEINK (76 aa)).

This sequence belongs to the MADD family. Interacts with cab-1. As to expression, expressed in nearly all neurons.

It is found in the cell membrane. Its subcellular location is the cytoplasm. Functionally, guanyl-nucleotide exchange factor that regulates small GTPases. Converts GDP-bound inactive form of rab-3 and cab-1 to the GTP-bound active forms. Regulator of presynaptic activity that interacts with rab-3 to regulate synaptic vesicle release. Is also a regulator of the cab-1 synaptic transmission pathway. Probably by converting rab-3 to its GTP-bound active form, plays a role in the recruitment of endophilin unc-57 to synaptic vesicles. Probably by activating rab-3 and thus regulating the trafficking of dense-core vesicles, plays a role in AVG neuron-mediated formation of the right axon tract of the ventral nerve cord. Regulates anterior body muscle contractions (aBOC) and the expulsion steps during the defecation motor program (DMP). Probably by regulating DMP, required for fatty acid uptake by intestinal cells. This Caenorhabditis elegans protein is MAP kinase-activating death domain protein (aex-3).